Here is a 319-residue protein sequence, read N- to C-terminus: 12-(S)-hydroxy-5,8,10,14-eicosatetraenoic acid receptor (319 aa).

At 1–16 (MPFPNCSAPSTVVATA) the chain is on the extracellular side. N-linked (GlcNAc...) asparagine glycosylation is present at Asn5. Residues 17-37 (VGVLLGLECGLGLLGNAVALW) traverse the membrane as a helical segment. Topologically, residues 38-52 (TFLFRVRVWKPYAVY) are cytoplasmic. The helical transmembrane segment at 53–73 (LLNLALADLLLAACLPFLAAF) threads the bilayer. Residues 74-91 (YLSLQAWHLGRVGCWALH) lie on the Extracellular side of the membrane. Residues 92 to 110 (FLLDLSRSVGMAFLAAVAL) traverse the membrane as a helical segment. Residues 111-131 (DRYLRVVHPRLKVNLLSPQAA) lie on the Cytoplasmic side of the membrane. Residues 132-152 (LGVSGLVWLLMVALTCPGLLI) traverse the membrane as a helical segment. Residues 153–180 (SEAAQNSTRCHSFYSRADGSFSIIWQEA) lie on the Extracellular side of the membrane. A helical transmembrane segment spans residues 181–201 (LSCLQFVLPFGLIVFCNAGII). The Cytoplasmic portion of the chain corresponds to 202–219 (RALQKRLREPEKQPKLQR). Residues 220 to 240 (AQALVTLVVVLFALCFLPCFL) form a helical membrane-spanning segment. Over 241–265 (ARVLMHIFQNLGSCRALCAVAHTSD) the chain is Extracellular. Residues 266–284 (VTGSLTYLHSVLNPVVYCF) traverse the membrane as a helical segment. Residues 285 to 319 (SSPTFRSSYRRVFHTLRGKGQAAEPPDFNPRDSYS) are Cytoplasmic-facing.

This sequence belongs to the G-protein coupled receptor 1 family. As to quaternary structure, interacts with KRAS; in a farnesylation-dependent manner.

It is found in the cell membrane. Its function is as follows. High-affinity receptor for 12-(S)-hydroxy-5,8,10,14-eicosatetraenoic acid (12-S-HETE), with much lower affinities for other HETE isomers. 12-S-HETE is a eicosanoid, a 12-lipoxygenase (ALOX12) metabolite of arachidonic acid, involved in many physiologic and pathologic processes. 12-S-HETE-binding leads to activation of ERK1/2 (MAPK3/MAPK1), MEK, and NF-kappa-B pathways leading to cell growth. Plays a crucial role for proliferation, survival and macropinocytosis of KRAS-dependent cancer cells by mediating the translocation of KRAS from the endoplasmic reticulum to the plasma membrane (PM) and its association with the PM. Contributes to enhanced immune responses by inducing dendrite protrusion of small intestinal CX3CR1(+) phagocytes for the uptake of luminal antigens. Acts also as a key receptor for 12-(S)-HETE-mediated liver ischemia reperfusion injury. Functionally, proton-sensing G protein-coupled receptor. The protein is 12-(S)-hydroxy-5,8,10,14-eicosatetraenoic acid receptor (GPR31) of Homo sapiens (Human).